A 142-amino-acid chain; its full sequence is Transcription antitermination protein NusB (142 aa).

It belongs to the NusB family.

Its function is as follows. Involved in transcription antitermination. Required for transcription of ribosomal RNA (rRNA) genes. Binds specifically to the boxA antiterminator sequence of the ribosomal RNA (rrn) operons. The chain is Transcription antitermination protein NusB from Streptococcus mutans serotype c (strain ATCC 700610 / UA159).